A 157-amino-acid chain; its full sequence is Small ribosomal subunit protein uS7 (157 aa).

It belongs to the universal ribosomal protein uS7 family. In terms of assembly, part of the 30S ribosomal subunit. Contacts proteins S9 and S11.

Functionally, one of the primary rRNA binding proteins, it binds directly to 16S rRNA where it nucleates assembly of the head domain of the 30S subunit. Is located at the subunit interface close to the decoding center, probably blocks exit of the E-site tRNA. This Borrelia garinii subsp. bavariensis (strain ATCC BAA-2496 / DSM 23469 / PBi) (Borreliella bavariensis) protein is Small ribosomal subunit protein uS7.